Here is a 534-residue protein sequence, read N- to C-terminus: Inorganic phosphate transporter 1-4 (534 aa).

At 1–24 the chain is on the cytoplasmic side; sequence MAREQLQVLNALDVAKTQWYHFTA. A helical membrane pass occupies residues 25–45; the sequence is IIIAGMGFFTDAYDLFCISLV. Residues 46 to 70 lie on the Extracellular side of the membrane; sequence TKLLGRIYYHVEGAQKPGTLPPNVA. The helical transmembrane segment at 71-91 threads the bilayer; sequence AAVNGVAFCGTLAGQLFFGWL. Topologically, residues 92 to 99 are cytoplasmic; that stretch reads GDKLGRKK. A helical transmembrane segment spans residues 100-120; the sequence is VYGMTLMVMVLCSIASGLSFG. Topologically, residues 121 to 131 are extracellular; it reads HEPKAVMATLC. A helical transmembrane segment spans residues 132–152; it reads FFRFWLGFGIGGDYPLSATIM. Residues 153–161 are Cytoplasmic-facing; that stretch reads SEYANKKTR. The helical transmembrane segment at 162-182 threads the bilayer; that stretch reads GAFVSAVFAMQGFGIMAGGIF. At 183-211 the chain is on the extracellular side; it reads AIIISSAFEAKFPSPAYADDALGSTIPQA. The helical transmembrane segment at 212–232 threads the bilayer; the sequence is DLVWRIILMAGAIPAAMTYYS. The Cytoplasmic portion of the chain corresponds to 233–293; the sequence is RSKMPETARY…GLFSKEFMSR (61 aa). Residues 294–314 traverse the membrane as a helical segment; that stretch reads HGLHLLGTTSTWFLLDIAFYS. Topologically, residues 315–349 are extracellular; sequence QNLFQKDIFSAIGWIPPAQSMNAIQEVFKIARAQT. A helical membrane pass occupies residues 350-370; it reads LIALCSTVPGYWFTVAFIDVI. The Cytoplasmic segment spans residues 371 to 372; sequence GR. The helical transmembrane segment at 373 to 393 threads the bilayer; sequence FAIQMMGFFFMTVFMFALAIP. The Extracellular portion of the chain corresponds to 394–403; sequence YNHWTHKENR. The chain crosses the membrane as a helical span at residues 404–424; sequence IGFVIMYSLTFFFANFGPNAT. At 425–442 the chain is on the cytoplasmic side; the sequence is TFVVPAEIFPARFRSTCH. The helical transmembrane segment at 443–463 threads the bilayer; the sequence is GISAASGKLGAMVGAFGFLYL. Topologically, residues 464–484 are extracellular; that stretch reads AQNPDKDKTDAGYPPGIGVRN. Residues 485-505 traverse the membrane as a helical segment; sequence SLIVLGVVNFLGILFTFLVPE. Residues 506–534 lie on the Cytoplasmic side of the membrane; sequence SKGKSLEEMSGENEDNENSNNDSRTVPIV. Positions 512–534 are disordered; the sequence is EEMSGENEDNENSNNDSRTVPIV. Ser524 and Ser528 each carry phosphoserine.

This sequence belongs to the major facilitator superfamily. Phosphate:H(+) symporter (TC 2.A.1.9) family. Interacts with NLA. Post-translationally, ubiquitinated by NLA. Ubiquitination of PHT1-4 leads to its degradation by the proteasome. In terms of tissue distribution, mostly expressed in roots, in tissues connecting the lateral roots to the primary root. Also present in flowers, in senescing anther filaments and in the abscission zone at the base of siliques. Expressed in hydathodes and axillary buds, and in some senescing leaves. After Pi starvation, localized in all cells of undifferentiated root segments, including root tips and root hairs, and in the epidermis, cortex and stellar regions of mature root segments.

It is found in the cell membrane. Its function is as follows. High-affinity transporter for external inorganic phosphate. Acts as a H(+):phosphate symporter in both low- and high-Pi conditions. Confers sensitivity to arsenate. The protein is Inorganic phosphate transporter 1-4 (PHT1-4) of Arabidopsis thaliana (Mouse-ear cress).